The primary structure comprises 515 residues: Signal transduction histidine-protein kinase/phosphatase MprB (515 aa).

Topologically, residues 1-24 (MTLPPPPSRLKPPRNTSSLSLRWR) are cytoplasmic. The helical transmembrane segment at 25–45 (VMLLAMSMVAMVVVLMSVAVY) threads the bilayer. The Extracellular segment spans residues 46-165 (AVVSRALYDD…TGQVLGRLGT (120 aa)). A helical transmembrane segment spans residues 166-186 (VLLIVGGVGVAVAAIAGGMVA). The HAMP domain maps to 187–239 (RAGLRPVGRLTQAAERVARTDDLRPIPVFGSDELARLTEAFNMMLRALTESRE). The Cytoplasmic segment spans residues 187–515 (RAGLRPVGRL…GKSRSASKEL (329 aa)). One can recognise a Histidine kinase domain in the interval 247–467 (DAGHELRTPL…SFYVMLPGRP (221 aa)). His250 is subject to Phosphohistidine; by autocatalysis. The segment at 468-515 (LTPGGNGTAPVPAAQFDPDMRSAGSRADRRVIKNTETNGKSRSASKEL) is disordered.

It depends on Mg(2+) as a cofactor. Mn(2+) serves as cofactor. Autophosphorylated.

It is found in the cell membrane. The catalysed reaction is ATP + protein L-histidine = ADP + protein N-phospho-L-histidine.. Functionally, member of the two-component regulatory system MprB/MprA which contributes to maintaining a balance among several systems involved in stress resistance and is required for establishment and maintenance of persistent infection in the host. In response to environmental signals MprB acts both as a membrane-associated protein kinase that undergoes autophosphorylation and subsequently transfers the phosphate to MprA, and a protein phosphatase that dephosphorylates phospho-MprA. The sequence is that of Signal transduction histidine-protein kinase/phosphatase MprB (mprB) from Mycobacterium sp. (strain KMS).